A 439-amino-acid polypeptide reads, in one-letter code: UDP-N-acetylmuramoylalanine--D-glutamate ligase (439 aa).

116 to 122 (GSNGKTT) is a binding site for ATP.

It belongs to the MurCDEF family.

It is found in the cytoplasm. The enzyme catalyses UDP-N-acetyl-alpha-D-muramoyl-L-alanine + D-glutamate + ATP = UDP-N-acetyl-alpha-D-muramoyl-L-alanyl-D-glutamate + ADP + phosphate + H(+). It participates in cell wall biogenesis; peptidoglycan biosynthesis. Cell wall formation. Catalyzes the addition of glutamate to the nucleotide precursor UDP-N-acetylmuramoyl-L-alanine (UMA). The sequence is that of UDP-N-acetylmuramoylalanine--D-glutamate ligase from Shewanella oneidensis (strain ATCC 700550 / JCM 31522 / CIP 106686 / LMG 19005 / NCIMB 14063 / MR-1).